We begin with the raw amino-acid sequence, 293 residues long: Ribosomal protein L11 methyltransferase (293 aa).

S-adenosyl-L-methionine-binding residues include T145, G166, D188, and N230.

This sequence belongs to the methyltransferase superfamily. PrmA family.

Its subcellular location is the cytoplasm. The enzyme catalyses L-lysyl-[protein] + 3 S-adenosyl-L-methionine = N(6),N(6),N(6)-trimethyl-L-lysyl-[protein] + 3 S-adenosyl-L-homocysteine + 3 H(+). Methylates ribosomal protein L11. The chain is Ribosomal protein L11 methyltransferase from Actinobacillus pleuropneumoniae serotype 5b (strain L20).